A 66-amino-acid polypeptide reads, in one-letter code: Small vasohibin-binding protein (66 aa).

Positions 1–23 (MDPPARKEKTKVKESVSRVEKAK) are enriched in basic and acidic residues. The interval 1 to 31 (MDPPARKEKTKVKESVSRVEKAKQKSAQQEL) is disordered. A coiled-coil region spans residues 5–52 (ARKEKTKVKESVSRVEKAKQKSAQQELKQRQRAEIYALNRVMTELEQQ).

This sequence belongs to the SVBP family. As to quaternary structure, interacts with VASH1 and VASH2.

The protein localises to the cytoplasm. It localises to the secreted. It is found in the cytoskeleton. Enhances the tyrosine carboxypeptidase activity of VASH1 and VASH2, thereby promoting the removal of the C-terminal tyrosine residue of alpha-tubulin. This activity is critical for spindle function and accurate chromosome segregation during mitosis since microtubule detyronisation regulates mitotic spindle length and postioning. Also required to enhance the solubility and secretion of VASH1 and VASH2. Plays a role in axon and excitatory synapse formation. This Homo sapiens (Human) protein is Small vasohibin-binding protein.